The chain runs to 268 residues: Ubiquinone biosynthesis protein COQ4 homolog, mitochondrial (268 aa).

Residues His-171, Asp-172, His-175, and Glu-187 each coordinate Zn(2+).

It belongs to the COQ4 family. In terms of assembly, component of a multi-subunit COQ enzyme complex. The cofactor is Zn(2+).

The protein localises to the mitochondrion inner membrane. It carries out the reaction a 4-hydroxy-3-methoxy-5-(all-trans-polyprenyl)benzoate + H(+) = a 2-methoxy-6-(all-trans-polyprenyl)phenol + CO2. It functions in the pathway cofactor biosynthesis; ubiquinone biosynthesis. In terms of biological role, lyase that catalyzes the C1-decarboxylation of 4-hydroxy-3-methoxy-5-(all-trans-polyprenyl)benzoic acid into 2-methoxy-6-(all-trans-polyprenyl)phenol during ubiquinone biosynthesis. This chain is Ubiquinone biosynthesis protein COQ4 homolog, mitochondrial, found in Drosophila erecta (Fruit fly).